Here is a 538-residue protein sequence, read N- to C-terminus: Chaperonin GroEL (538 aa).

Residues 30–33, 87–91, Gly415, 479–481, and Asp495 contribute to the ATP site; these read TLGP, DGTTT, and DAA.

Belongs to the chaperonin (HSP60) family. Forms a cylinder of 14 subunits composed of two heptameric rings stacked back-to-back. Interacts with the co-chaperonin GroES.

Its subcellular location is the cytoplasm. The catalysed reaction is ATP + H2O + a folded polypeptide = ADP + phosphate + an unfolded polypeptide.. Functionally, together with its co-chaperonin GroES, plays an essential role in assisting protein folding. The GroEL-GroES system forms a nano-cage that allows encapsulation of the non-native substrate proteins and provides a physical environment optimized to promote and accelerate protein folding. This Dictyoglomus thermophilum (strain ATCC 35947 / DSM 3960 / H-6-12) protein is Chaperonin GroEL.